We begin with the raw amino-acid sequence, 304 residues long: MDRLETTIAGVKLKSPVMNASGTAAYGQQMAKNIDLNELGAFVIKSTTMEPRAGHPWPTTAATTGGWLNAVGLKNPGIEHVLAYELPWLAENYPDLPIVGSIAGSNPDDYVEVAKRMATAPNVKFIEVNISCPNVAKGGLAFGTDPVVVEDMTRRIKAVVPNKPVFMKLTPGVTEIVPIALAAERGGADGLVMINTLMGMEIDLETRKPRLSNGTGGLSGKAIHPIAVRMIHQVREVTNLPIIGVGGVFSAKDALELMVAGAGAVQVGSANYGNPHACHDIIQGLVPAMDQYHFNNIAEFSSEK.

FMN contacts are provided by residues Ser-21 and 45 to 46 (KS). Residues Lys-45, 69–73 (NAVGL), and Asn-129 contribute to the substrate site. FMN is bound at residue Asn-129. The active-site Nucleophile is the Cys-132. FMN is bound by residues Lys-168 and Ile-194. Residue 195-196 (NT) participates in substrate binding. FMN-binding positions include Gly-220, 246 to 247 (GG), and 268 to 269 (GS).

Belongs to the dihydroorotate dehydrogenase family. Type 1 subfamily. In terms of assembly, homodimer. Requires FMN as cofactor.

The protein resides in the cytoplasm. The enzyme catalyses (S)-dihydroorotate + fumarate = orotate + succinate. It functions in the pathway pyrimidine metabolism; UMP biosynthesis via de novo pathway. Its function is as follows. Catalyzes the conversion of dihydroorotate to orotate with fumarate as the electron acceptor. The sequence is that of Putative dihydroorotate dehydrogenase A (fumarate) (pyrD) from Pediococcus pentosaceus (strain ATCC 25745 / CCUG 21536 / LMG 10740 / 183-1w).